Consider the following 510-residue polypeptide: 2,3-bisphosphoglycerate-independent phosphoglycerate mutase (510 aa).

Asp12 and Ser62 together coordinate Mn(2+). Ser62 acts as the Phosphoserine intermediate in catalysis. Substrate is bound by residues His123, 152 to 153, Arg184, Arg190, 257 to 260, and Lys331; these read RD and RADR. Mn(2+)-binding residues include Asp399, His403, Asp440, His441, and His458.

Belongs to the BPG-independent phosphoglycerate mutase family. As to quaternary structure, monomer. Mn(2+) is required as a cofactor.

The catalysed reaction is (2R)-2-phosphoglycerate = (2R)-3-phosphoglycerate. It functions in the pathway carbohydrate degradation; glycolysis; pyruvate from D-glyceraldehyde 3-phosphate: step 3/5. Catalyzes the interconversion of 2-phosphoglycerate and 3-phosphoglycerate. The sequence is that of 2,3-bisphosphoglycerate-independent phosphoglycerate mutase from Lawsonia intracellularis (strain PHE/MN1-00).